A 294-amino-acid polypeptide reads, in one-letter code: Small ribosomal subunit protein uS3 (294 aa).

The region spanning 39 to 107 (VREYLKTKLK…PVAVNIEEVR (69 aa)) is the KH type-2 domain. The segment at 210-294 (RNDLPAVETP…AAPAADVKGE (85 aa)) is disordered. Residues 219–238 (PRPDEERRPRGPRRDGRPGG) show a composition bias toward basic and acidic residues. 2 stretches are compositionally biased toward low complexity: residues 249 to 258 (RPAAGNSAPA) and 281 to 294 (VAAPAAPAADVKGE).

Belongs to the universal ribosomal protein uS3 family. Part of the 30S ribosomal subunit. Forms a tight complex with proteins S10 and S14.

Functionally, binds the lower part of the 30S subunit head. Binds mRNA in the 70S ribosome, positioning it for translation. This Verminephrobacter eiseniae (strain EF01-2) protein is Small ribosomal subunit protein uS3.